Reading from the N-terminus, the 62-residue chain is Sec-independent protein translocase protein TatAc (62 aa).

The helical transmembrane segment at 8–28 threads the bilayer; the sequence is ILVILFVGFLVFGPDKLPALG.

Belongs to the TatA/E family. As to quaternary structure, forms a complex with TatC.

The protein resides in the cell membrane. Functionally, part of the twin-arginine translocation (Tat) system that transports large folded proteins containing a characteristic twin-arginine motif in their signal peptide across membranes. TatA could form the protein-conducting channel of the Tat system. This Bacillus subtilis (strain 168) protein is Sec-independent protein translocase protein TatAc.